A 124-amino-acid chain; its full sequence is Acidic phospholipase A2 (124 aa).

7 cysteine pairs are disulfide-bonded: C26–C116, C28–C44, C43–C95, C49–C124, C50–C88, C57–C81, and C75–C86. 3 residues coordinate Ca(2+): Y27, G29, and G31. The active site involves H47. Ca(2+) is bound at residue D48. Residue D89 is part of the active site.

This sequence belongs to the phospholipase A2 family. Group II subfamily. D49 sub-subfamily. In terms of assembly, monomer. Ca(2+) serves as cofactor. As to expression, expressed by the venom gland.

Its subcellular location is the secreted. It carries out the reaction a 1,2-diacyl-sn-glycero-3-phosphocholine + H2O = a 1-acyl-sn-glycero-3-phosphocholine + a fatty acid + H(+). Snake venom phospholipase A2 (PLA2) that acts in vivo as an anti-thrombotic agent. Inhibits platelet aggregation induced by ADP, arachidonic acid, and thrombin. PLA2 catalyzes the calcium-dependent hydrolysis of the 2-acyl groups in 3-sn-phosphoglycerides. In Gloydius halys (Chinese water mocassin), this protein is Acidic phospholipase A2.